The following is a 109-amino-acid chain: RNA-binding protein Hfq (109 aa).

Residues 9–68 enclose the Sm domain; that stretch reads DPFLNALRKEKVSVSVYLVNGIKLQGQVEAFDQFCIVLRNTVNQMVYKHAISTIVPAKSV. Positions 77 to 109 are disordered; the sequence is PYHQNSNDEQDENVDDIHSDDLEIQENEGNIHE.

The protein belongs to the Hfq family. Homohexamer.

Its function is as follows. RNA chaperone that binds small regulatory RNA (sRNAs) and mRNAs to facilitate mRNA translational regulation in response to envelope stress, environmental stress and changes in metabolite concentrations. Also binds with high specificity to tRNAs. This is RNA-binding protein Hfq from Francisella tularensis subsp. tularensis (strain FSC 198).